The chain runs to 180 residues: Large ribosomal subunit protein uL5 (180 aa).

This sequence belongs to the universal ribosomal protein uL5 family. As to quaternary structure, part of the 50S ribosomal subunit; part of the 5S rRNA/L5/L18/L25 subcomplex. Contacts the 5S rRNA and the P site tRNA. Forms a bridge to the 30S subunit in the 70S ribosome.

In terms of biological role, this is one of the proteins that bind and probably mediate the attachment of the 5S RNA into the large ribosomal subunit, where it forms part of the central protuberance. In the 70S ribosome it contacts protein S13 of the 30S subunit (bridge B1b), connecting the 2 subunits; this bridge is implicated in subunit movement. Contacts the P site tRNA; the 5S rRNA and some of its associated proteins might help stabilize positioning of ribosome-bound tRNAs. This Pediococcus pentosaceus (strain ATCC 25745 / CCUG 21536 / LMG 10740 / 183-1w) protein is Large ribosomal subunit protein uL5.